Reading from the N-terminus, the 139-residue chain is MSTAIQPAGTAGGGGSDSNGLADVVDTILDKGLVLDAYVRVSVVGIEILTVDARVVVASVDTYLRYADAVNRLDIVNEDPKSDLGGLVGDVAESATSGVAKGKTTGVLEAAGEKLGDMLTSDEPEPRKATRVRSRRADR.

Positions 113–139 (EKLGDMLTSDEPEPRKATRVRSRRADR) are disordered. Residues 129-139 (ATRVRSRRADR) show a composition bias toward basic residues.

It belongs to the gas vesicle GvpA family. In terms of assembly, the gas vesicle shell is 2 nm thick and consists of a single layer of this protein. It forms helical ribs nearly perpendicular to the long axis of the vesicle.

The protein localises to the gas vesicle shell. Its function is as follows. Gas vesicles are hollow, gas filled proteinaceous nanostructures found in some microorganisms. During planktonic growth they allow positioning of the organism at a favorable depth for light or nutrient acquisition. GvpA forms the protein shell. In Mycobacterium sp. (strain JLS), this protein is Gas vesicle protein A.